The following is a 227-amino-acid chain: NAD(P)H-quinone oxidoreductase subunit K, chloroplastic (227 aa).

Positions 43, 44, 108, and 139 each coordinate [4Fe-4S] cluster. Polar residues predominate over residues 173-192 (RSFTTNHKFQVGRSSHTGNY). The tract at residues 173–201 (RSFTTNHKFQVGRSSHTGNYDQGFLSKPP) is disordered.

Belongs to the complex I 20 kDa subunit family. As to quaternary structure, NDH is composed of at least 16 different subunits, 5 of which are encoded in the nucleus. [4Fe-4S] cluster is required as a cofactor.

The protein localises to the plastid. Its subcellular location is the chloroplast thylakoid membrane. The enzyme catalyses a plastoquinone + NADH + (n+1) H(+)(in) = a plastoquinol + NAD(+) + n H(+)(out). The catalysed reaction is a plastoquinone + NADPH + (n+1) H(+)(in) = a plastoquinol + NADP(+) + n H(+)(out). In terms of biological role, NDH shuttles electrons from NAD(P)H:plastoquinone, via FMN and iron-sulfur (Fe-S) centers, to quinones in the photosynthetic chain and possibly in a chloroplast respiratory chain. The immediate electron acceptor for the enzyme in this species is believed to be plastoquinone. Couples the redox reaction to proton translocation, and thus conserves the redox energy in a proton gradient. The chain is NAD(P)H-quinone oxidoreductase subunit K, chloroplastic from Trachelium caeruleum (Blue throatwort).